Consider the following 86-residue polypeptide: Polcalcin Che a 3 (86 aa).

2 consecutive EF-hand domains span residues 8–43 (QDIA…LGSV) and 43–78 (VTPD…NRGL). Residues D21, N23, D25, K27, E32, D56, D58, D60, and E67 each contribute to the Ca(2+) site.

This Chenopodium album (Fat hen) protein is Polcalcin Che a 3.